The sequence spans 519 residues: Membrane-bound glycerophospholipid O-acyltransferase 2 (519 aa).

The next 6 membrane-spanning stretches (helical) occupy residues 22 to 42 (PIDQ…AVWF), 61 to 81 (TLLG…HFLV), 88 to 108 (CIMI…FALG), 184 to 204 (FMGI…FIEG), 236 to 256 (LLVC…LPVE), and 288 to 305 (YFAW…GFGF). Residues N341 and H372 contribute to the active site. The next 3 helical transmembrane spans lie at 365–385 (FFLS…FLTG), 415–435 (IITW…FVLL), and 443–463 (FYRS…LLLP).

The protein belongs to the membrane-bound acyltransferase family.

Its subcellular location is the endoplasmic reticulum membrane. It carries out the reaction a 1-acyl-sn-glycero-3-phosphocholine + an acyl-CoA = a 1,2-diacyl-sn-glycero-3-phosphocholine + CoA. The enzyme catalyses a 1-acyl-sn-glycero-3-phosphoethanolamine + an acyl-CoA = a 1,2-diacyl-sn-glycero-3-phosphoethanolamine + CoA. It catalyses the reaction a 1-acyl-sn-glycero-3-phosphate + an acyl-CoA = a 1,2-diacyl-sn-glycero-3-phosphate + CoA. The catalysed reaction is (9Z)-hexadecenoyl-CoA + 1-hexadecanoyl-sn-glycero-3-phosphocholine = 1-hexadecanoyl-2-(9Z-hexadecenoyl)-sn-glycero-3-phosphocholine + CoA. It carries out the reaction 1-hexadecanoyl-sn-glycero-3-phosphoethanolamine + (9Z)-octadecenoyl-CoA = 1-hexadecanoyl-2-(9Z-octadecenoyl)-sn-glycero-3-phosphoethanolamine + CoA. The enzyme catalyses 1-hexadecanoyl-sn-glycero-3-phosphoethanolamine + (9Z)-hexadecenoyl-CoA = 1-hexadecanoyl-2-(9Z)-hexadecenoyl-sn-glycero-3-phosphoethanolamine + CoA. It catalyses the reaction 1-(9Z-octadecenoyl)-sn-glycero-3-phospho-L-serine + hexadecanoyl-CoA = 1-(9Z)-octadecenoyl-2-hexadecanoyl-sn-glycero-3-phosphoserine + CoA. The catalysed reaction is (9Z,12Z)-octadecadienoyl-CoA + 1-hexadecanoyl-sn-glycero-3-phosphocholine = 1-hexadecanoyl-2-(9Z,12Z-octadecadienoyl)-sn-glycero-3-phosphocholine + CoA. It carries out the reaction 1-hexadecanoyl-sn-glycero-3-phosphocholine + (9Z)-octadecenoyl-CoA = 1-hexadecanoyl-2-(9Z-octadecenoyl)-sn-glycero-3-phosphocholine + CoA. The enzyme catalyses 1-hexadecanoyl-sn-glycero-3-phosphate + (9Z)-hexadecenoyl-CoA = 1-hexadecanoyl-2-[(9Z)-hexadec-9-enoyl]-sn-glycero-3-phosphate + CoA. It catalyses the reaction 1-hexadecanoyl-sn-glycero-3-phosphate + (9Z)-octadecenoyl-CoA = 1-hexadecanoyl-2-(9Z-octadecenoyl)-sn-glycero-3-phosphate + CoA. The catalysed reaction is a 1-O-(1Z-alkenyl)-sn-glycero-3-phosphocholine + (9Z)-octadecenoyl-CoA = 1-O-(1Z)-alkenyl-2-(9Z)-octadecenoyl-sn-glycero-3-phosphocholine + CoA. It carries out the reaction a 1-O-(1Z-alkenyl)-sn-glycero-3-phosphoethanolamine + (9Z)-octadecenoyl-CoA = 1-O-(1Z)-alkenyl-2-(9Z)-octadecenoyl-sn-glycero-3-phosphoethanolamine + CoA. The enzyme catalyses 1-octadecanoyl-sn-glycero-3-phosphoethanolamine + (9Z)-octadecenoyl-CoA = 1-octadecanoyl-2-(9Z-octadecenoyl)-sn-glycero-3-phosphoethanolamine + CoA. It catalyses the reaction 1-octadecanoyl-sn-glycero-3-phosphocholine + (9Z)-octadecenoyl-CoA = 1-octadecanoyl-2-(9Z-octadecenoyl)-sn-glycero-3-phosphocholine + CoA. The catalysed reaction is 1-(9Z-octadecenoyl)-sn-glycero-3-phosphoethanolamine + (9Z)-octadecenoyl-CoA = 1,2-di-(9Z-octadecenoyl)-sn-glycero-3-phosphoethanolamine + CoA. Its pathway is lipid metabolism; phospholipid metabolism. With respect to regulation, partially inhibited by thimerosal. In terms of biological role, acyltransferase which catalyzes the transfer of an acyl group from an acyl-CoA to a lysophospholipid leading to the production of a phospholipid and participates in the reacylation step of the phospholipid remodeling pathway also known as the Lands cycle. May catalyze preferentially the acylation of lysophosphatidylethanolamine (1-acyl-sn-glycero-3-phosphoethanolamine or LPE) and lysophosphatidic acid (LPA) and to a lesser extend lysophosphatidylcholine (LPC) and lysophosphatidylserine (LPS). Prefers oleoyl-CoA as the acyl donor. May be involved in chondrocyte differentiation. The protein is Membrane-bound glycerophospholipid O-acyltransferase 2 of Rattus norvegicus (Rat).